The chain runs to 102 residues: Putative pterin-4-alpha-carbinolamine dehydratase (102 aa).

The protein belongs to the pterin-4-alpha-carbinolamine dehydratase family.

The catalysed reaction is (4aS,6R)-4a-hydroxy-L-erythro-5,6,7,8-tetrahydrobiopterin = (6R)-L-erythro-6,7-dihydrobiopterin + H2O. This is Putative pterin-4-alpha-carbinolamine dehydratase from Psychromonas ingrahamii (strain DSM 17664 / CCUG 51855 / 37).